The following is a 102-amino-acid chain: MEKISNLLEDKPVVIFSKTSCCMSHSIKSLISGYGANSTVYELDEMSNGPEIERALVELGCKPTVPAVFIGQELVGGANQLMSLQVRNQLASLLRRAGAIWI.

The Glutaredoxin domain occupies 1 to 101 (MEKISNLLED…SLLRRAGAIW (101 aa)). Cys21 serves as a coordination point for [2Fe-2S] cluster.

Belongs to the glutaredoxin family. CC-type subfamily.

The protein resides in the cytoplasm. Functionally, may only reduce GSH-thiol disulfides, but not protein disulfides. The protein is Monothiol glutaredoxin-S1 (GRXS1) of Arabidopsis thaliana (Mouse-ear cress).